A 123-amino-acid polypeptide reads, in one-letter code: Large ribosomal subunit protein bL12 (123 aa).

This sequence belongs to the bacterial ribosomal protein bL12 family. In terms of assembly, homodimer. Part of the ribosomal stalk of the 50S ribosomal subunit. Forms a multimeric L10(L12)X complex, where L10 forms an elongated spine to which 2 to 4 L12 dimers bind in a sequential fashion. Binds GTP-bound translation factors.

In terms of biological role, forms part of the ribosomal stalk which helps the ribosome interact with GTP-bound translation factors. Is thus essential for accurate translation. The polypeptide is Large ribosomal subunit protein bL12 (Geobacillus kaustophilus (strain HTA426)).